The primary structure comprises 271 residues: Tryptophan synthase alpha chain (271 aa).

Active-site proton acceptor residues include E49 and D60.

The protein belongs to the TrpA family. As to quaternary structure, tetramer of two alpha and two beta chains.

It carries out the reaction (1S,2R)-1-C-(indol-3-yl)glycerol 3-phosphate + L-serine = D-glyceraldehyde 3-phosphate + L-tryptophan + H2O. It participates in amino-acid biosynthesis; L-tryptophan biosynthesis; L-tryptophan from chorismate: step 5/5. Functionally, the alpha subunit is responsible for the aldol cleavage of indoleglycerol phosphate to indole and glyceraldehyde 3-phosphate. This chain is Tryptophan synthase alpha chain, found in Burkholderia ambifaria (strain MC40-6).